The following is a 217-amino-acid chain: Protein-L-isoaspartate O-methyltransferase (217 aa).

The active site involves Ser61.

The protein belongs to the methyltransferase superfamily. L-isoaspartyl/D-aspartyl protein methyltransferase family.

The protein resides in the cytoplasm. It catalyses the reaction [protein]-L-isoaspartate + S-adenosyl-L-methionine = [protein]-L-isoaspartate alpha-methyl ester + S-adenosyl-L-homocysteine. In terms of biological role, catalyzes the methyl esterification of L-isoaspartyl residues in peptides and proteins that result from spontaneous decomposition of normal L-aspartyl and L-asparaginyl residues. It plays a role in the repair and/or degradation of damaged proteins. The protein is Protein-L-isoaspartate O-methyltransferase of Brucella anthropi (strain ATCC 49188 / DSM 6882 / CCUG 24695 / JCM 21032 / LMG 3331 / NBRC 15819 / NCTC 12168 / Alc 37) (Ochrobactrum anthropi).